The chain runs to 517 residues: Maturase K (517 aa).

The protein belongs to the intron maturase 2 family. MatK subfamily.

The protein localises to the plastid. The protein resides in the chloroplast. Its function is as follows. Usually encoded in the trnK tRNA gene intron. Probably assists in splicing its own and other chloroplast group II introns. The polypeptide is Maturase K (Trillium maculatum (Spotted wakerobin)).